The primary structure comprises 242 residues: Peroxisomal membrane protein 11-3 (242 aa).

Positions 1-22 are disordered; the sequence is MAAAAAAAGSSDSRKPAAHPPP. Residues 1-102 lie on the Cytoplasmic side of the membrane; it reads MAAAAAAAGS…LRAHPHPPPA (102 aa). Residues 103–123 traverse the membrane as a helical segment; sequence VALLAYGGEGVYYFLEQFVWL. Residues 124–214 lie on the Lumenal side of the membrane; that stretch reads AKAGLLPAHL…MALGDVTDGK (91 aa). The chain crosses the membrane as a helical span at residues 215 to 235; that stretch reads GLLGSSTLMASAGLLSALISA. Topologically, residues 236–242 are cytoplasmic; that stretch reads HKNWNSC.

The protein belongs to the peroxin-11 family. Expressed in seedlings, roots, leaf sheaths, spikelets and endosperm.

The protein localises to the peroxisome membrane. In terms of biological role, involved in peroxisomal proliferation. This is Peroxisomal membrane protein 11-3 (PEX11-3) from Oryza sativa subsp. japonica (Rice).